Consider the following 406-residue polypeptide: Tubby-like F-box protein 3 (406 aa).

One can recognise an F-box domain in the interval 50-105 (SCWASMPPELLRDVLMRIEQSEDTWPSRKNVVSCAGVCRNWREIVKEIVRVPELSS).

This sequence belongs to the TUB family. Ubiquitous at low levels. Not detected in mature siliques.

The protein localises to the cell membrane. It is found in the plastid. The protein resides in the nucleus. Its subcellular location is the nucleoplasm. It localises to the cytoplasm. Involved in abiotic stress signaling. Tethered to plasma membrane (PM) and probably bound to phosphatidylinositol 4,5-bisphosphate. Abiotic stresses (drought, salt, H(2)O(2)) trigger phospholipase C mediated PM dislogement and plastidial and nucleocytosolic relocation of TULP3. The chain is Tubby-like F-box protein 3 from Arabidopsis thaliana (Mouse-ear cress).